A 310-amino-acid polypeptide reads, in one-letter code: Olfactory receptor 5AR1 (310 aa).

Over 1–28 the chain is Extracellular; it reads MDKENSSMVTEFIFMGITQDPQMEIIFF. N5 carries an N-linked (GlcNAc...) asparagine glycan. A helical transmembrane segment spans residues 29–49; sequence VVFLIVYLVNVVGNIGMIILI. Over 50-58 the chain is Cytoplasmic; the sequence is TTDTQLHTP. The helical transmembrane segment at 59–79 threads the bilayer; that stretch reads MYFFLCNLSFVDLGYSSAIAP. Over 80-100 the chain is Extracellular; the sequence is RMLADFLTNHKVISFSSCATQ. A disulfide bridge links C97 with C189. Residues 101–120 traverse the membrane as a helical segment; the sequence is FAFFVGFVDAECYVLAAMAY. At 121-139 the chain is on the cytoplasmic side; that stretch reads GRFVAICRPLHYSTFMSKQ. Residues 140 to 160 form a helical membrane-spanning segment; the sequence is VCLALMLGSYLAGLVSLVAHT. Residues 161-205 lie on the Extracellular side of the membrane; it reads TLTFSLSYCGSNIINHFFCEIPPLLALSCSDTYISEILLFSLCGF. A helical transmembrane segment spans residues 206–226; the sequence is IEFSTILIIFISYTFILVAII. The Cytoplasmic portion of the chain corresponds to 227-239; the sequence is RMRSAEGRLKAFS. Residues 240-260 traverse the membrane as a helical segment; that stretch reads TCGSHLTGITLFYGTVMFMYL. The Extracellular portion of the chain corresponds to 261 to 271; that stretch reads RPTSSYSLDQD. A helical transmembrane segment spans residues 272–292; the sequence is KWASVFYTVIIPMLNPLIYSL. At 293–310 the chain is on the cytoplasmic side; the sequence is RNKDVKAAFKKLIGKKSQ.

Belongs to the G-protein coupled receptor 1 family.

It is found in the cell membrane. In terms of biological role, odorant receptor. The chain is Olfactory receptor 5AR1 from Homo sapiens (Human).